Here is a 136-residue protein sequence, read N- to C-terminus: ATP synthase epsilon chain, chloroplastic (136 aa).

Belongs to the ATPase epsilon chain family. In terms of assembly, F-type ATPases have 2 components, CF(1) - the catalytic core - and CF(0) - the membrane proton channel. CF(1) has five subunits: alpha(3), beta(3), gamma(1), delta(1), epsilon(1). CF(0) has three main subunits: a, b and c.

Its subcellular location is the plastid. It localises to the chloroplast thylakoid membrane. In terms of biological role, produces ATP from ADP in the presence of a proton gradient across the membrane. The protein is ATP synthase epsilon chain, chloroplastic of Chaetosphaeridium globosum (Charophycean green alga).